A 121-amino-acid polypeptide reads, in one-letter code: Protein p14.5 (121 aa).

At A2 the chain carries N-acetylalanine; by host. Residues 84–121 form a disordered region; the sequence is SLVPDEADNKPEDDEESGGAKPKKKKHLFPKLSSHKSK. Residues 104–121 are compositionally biased toward basic residues; that stretch reads KPKKKKHLFPKLSSHKSK.

This sequence belongs to the asfivirus structural protein p14.5 family. Interacts with the major capsid protein. Interacts with host IRF3; this interaction interferes with the recruitment of IRF3 to TBK1. Acetylated.

The protein localises to the virion. Its function is as follows. Structural protein required for transport of intracellular particles from the assembly sites to the plasma membrane. Binds to both ssDNA and dsDNA. Suppressed the activation of the cGAS/STING pathway by interfering with the recruitment of IRF3 to TBK1, which in turn suppresses IRF3 phosphorylation, decreasing interferon production. This is Protein p14.5 from African swine fever virus (isolate Pig/Kenya/KEN-50/1950) (ASFV).